We begin with the raw amino-acid sequence, 667 residues long: Probable export ATP-binding/permease protein MacB (667 aa).

The ABC transporter domain occupies 22–260 (LRLAGVSRRF…PVEEVQPAAE (239 aa)). 58–65 (GASGSGKS) provides a ligand contact to ATP. The next 4 membrane-spanning stretches (helical) occupy residues 292–312 (LLTMLGIIIGITSVVSISAIG), 540–560 (LTLLLSLIAVISLVVGGIGVM), 601–621 (IGGVIGIGLSYGIGYLFALFV), and 630–650 (LGSIVTAFVCSTLIGIVFGFV).

It belongs to the ABC transporter superfamily. Macrolide exporter (TC 3.A.1.122) family. In terms of assembly, probably part of a tripartite efflux system, which is composed of an inner membrane transporter, a periplasmic membrane fusion protein, and an outer membrane component.

The protein localises to the cell inner membrane. Its function is as follows. Probably part of a tripartite efflux system. This Pseudomonas entomophila (strain L48) protein is Probable export ATP-binding/permease protein MacB.